The primary structure comprises 197 residues: NADH-quinone oxidoreductase subunit C (197 aa).

It belongs to the complex I 30 kDa subunit family. In terms of assembly, NDH-1 is composed of 14 different subunits. Subunits NuoB, C, D, E, F, and G constitute the peripheral sector of the complex.

The protein resides in the cell inner membrane. The enzyme catalyses a quinone + NADH + 5 H(+)(in) = a quinol + NAD(+) + 4 H(+)(out). Its function is as follows. NDH-1 shuttles electrons from NADH, via FMN and iron-sulfur (Fe-S) centers, to quinones in the respiratory chain. The immediate electron acceptor for the enzyme in this species is believed to be ubiquinone. Couples the redox reaction to proton translocation (for every two electrons transferred, four hydrogen ions are translocated across the cytoplasmic membrane), and thus conserves the redox energy in a proton gradient. This is NADH-quinone oxidoreductase subunit C from Rickettsia typhi (strain ATCC VR-144 / Wilmington).